The chain runs to 571 residues: Proline--tRNA ligase (571 aa).

Belongs to the class-II aminoacyl-tRNA synthetase family. ProS type 1 subfamily. As to quaternary structure, homodimer.

The protein localises to the cytoplasm. It carries out the reaction tRNA(Pro) + L-proline + ATP = L-prolyl-tRNA(Pro) + AMP + diphosphate. In terms of biological role, catalyzes the attachment of proline to tRNA(Pro) in a two-step reaction: proline is first activated by ATP to form Pro-AMP and then transferred to the acceptor end of tRNA(Pro). As ProRS can inadvertently accommodate and process non-cognate amino acids such as alanine and cysteine, to avoid such errors it has two additional distinct editing activities against alanine. One activity is designated as 'pretransfer' editing and involves the tRNA(Pro)-independent hydrolysis of activated Ala-AMP. The other activity is designated 'posttransfer' editing and involves deacylation of mischarged Ala-tRNA(Pro). The misacylated Cys-tRNA(Pro) is not edited by ProRS. This is Proline--tRNA ligase from Photobacterium profundum (strain SS9).